The following is a 116-amino-acid chain: Iron-sulfur cluster insertion protein ErpA (116 aa).

Iron-sulfur cluster contacts are provided by C44, C108, and C110.

This sequence belongs to the HesB/IscA family. As to quaternary structure, homodimer. It depends on iron-sulfur cluster as a cofactor.

Functionally, required for insertion of 4Fe-4S clusters for at least IspG. In Shewanella oneidensis (strain ATCC 700550 / JCM 31522 / CIP 106686 / LMG 19005 / NCIMB 14063 / MR-1), this protein is Iron-sulfur cluster insertion protein ErpA.